The chain runs to 176 residues: NAD(P)H-quinone oxidoreductase subunit 6, chloroplastic (176 aa).

5 helical membrane passes run 10 to 30 (FLLVFLGSGLIVGGLGVVLLP), 33 to 53 (IFSAFSLGFVLVCISLLYILA), 61 to 81 (AQLLIYVGAINVLIIFAVMFM), 92 to 112 (LWTVGDGITSLVCTTLLFSLI), and 152 to 172 (FFLPFELISIILLVALIGAIS).

It belongs to the complex I subunit 6 family. In terms of assembly, NDH is composed of at least 16 different subunits, 5 of which are encoded in the nucleus.

Its subcellular location is the plastid. It is found in the chloroplast thylakoid membrane. It carries out the reaction a plastoquinone + NADH + (n+1) H(+)(in) = a plastoquinol + NAD(+) + n H(+)(out). The catalysed reaction is a plastoquinone + NADPH + (n+1) H(+)(in) = a plastoquinol + NADP(+) + n H(+)(out). Its function is as follows. NDH shuttles electrons from NAD(P)H:plastoquinone, via FMN and iron-sulfur (Fe-S) centers, to quinones in the photosynthetic chain and possibly in a chloroplast respiratory chain. The immediate electron acceptor for the enzyme in this species is believed to be plastoquinone. Couples the redox reaction to proton translocation, and thus conserves the redox energy in a proton gradient. This Arabis hirsuta (Hairy rock-cress) protein is NAD(P)H-quinone oxidoreductase subunit 6, chloroplastic (ndhG).